Here is a 348-residue protein sequence, read N- to C-terminus: Ricin B-like lectin R40C1 (348 aa).

A disordered region spans residues Met-1 to Ala-26. The 147-residue stretch at Thr-199–Ile-345 folds into the Ricin B-type lectin domain.

Expressed in roots and shoots.

Its function is as follows. Lectin which binds carbohydrates in vitro. Interacts through its lectin domain with glycan structures containing specific motifs. This Oryza sativa subsp. japonica (Rice) protein is Ricin B-like lectin R40C1.